The following is a 462-amino-acid chain: Putative amidase AmiB2 (462 aa).

Catalysis depends on charge relay system residues K81 and S155. The active-site Acyl-ester intermediate is S179.

This sequence belongs to the amidase family.

It catalyses the reaction a monocarboxylic acid amide + H2O = a monocarboxylate + NH4(+). This is Putative amidase AmiB2 (amiB2) from Mycobacterium bovis (strain ATCC BAA-935 / AF2122/97).